The primary structure comprises 226 residues: Ribonuclease T (226 aa).

Residues 20–194 (VVIDVETAGF…YDTERTAELF (175 aa)) enclose the Exonuclease domain. The Mg(2+) site is built by aspartate 23, glutamate 25, histidine 181, and aspartate 186. Catalysis depends on histidine 181, which acts as the Proton donor/acceptor.

The protein belongs to the RNase T family. In terms of assembly, homodimer. Mg(2+) serves as cofactor.

Its function is as follows. Trims short 3' overhangs of a variety of RNA species, leaving a one or two nucleotide 3' overhang. Responsible for the end-turnover of tRNA: specifically removes the terminal AMP residue from uncharged tRNA (tRNA-C-C-A). Also appears to be involved in tRNA biosynthesis. This Shewanella denitrificans (strain OS217 / ATCC BAA-1090 / DSM 15013) protein is Ribonuclease T.